Consider the following 338-residue polypeptide: Cytoskeleton protein RodZ (338 aa).

Residues 1-111 are Cytoplasmic-facing; the sequence is MNTEASQDQT…LGKKHKKRDG (111 aa). Residues 19–79 enclose the HTH cro/C1-type domain; that stretch reads LRQAREALGL…KLVHLPEDEL (61 aa). The H-T-H motif DNA-binding region spans 30-49; the sequence is QQMVAERLCLKVSTIRDIEE. A helical; Signal-anchor for type II membrane protein membrane pass occupies residues 112-132; it reads WLMSFTWLIVLVVLGLTGAWW. At 133 to 338 the chain is on the periplasmic side; the sequence is WQNHQAQQAE…RVARLTVGVE (206 aa). Polar residues-rich tracts occupy residues 151-163 and 180-195; these read SAQL…QSVP and PVAN…NGTV. Positions 151–253 are disordered; sequence SAQLSQNGGQ…LPTADAGVTG (103 aa). Low complexity predominate over residues 196–209; the sequence is PATSSAAPADTANN. Residues 210–241 show a composition bias toward polar residues; it reads GVNTTAPQGTTSAESAVVSPSQAPLPSVSTAQ.

Belongs to the RodZ family.

The protein localises to the cell inner membrane. In terms of biological role, cytoskeletal protein that is involved in cell-shape control through regulation of the length of the long axis. The chain is Cytoskeleton protein RodZ from Yersinia enterocolitica serotype O:8 / biotype 1B (strain NCTC 13174 / 8081).